Here is a 278-residue protein sequence, read N- to C-terminus: Orotidine 5'-phosphate decarboxylase (278 aa).

Lysine 96 functions as the Proton donor in the catalytic mechanism.

The protein belongs to the OMP decarboxylase family. Type 2 subfamily.

It carries out the reaction orotidine 5'-phosphate + H(+) = UMP + CO2. It participates in pyrimidine metabolism; UMP biosynthesis via de novo pathway; UMP from orotate: step 2/2. The chain is Orotidine 5'-phosphate decarboxylase (pyrF) from Streptomyces coelicolor (strain ATCC BAA-471 / A3(2) / M145).